A 1184-amino-acid polypeptide reads, in one-letter code: DNA-directed RNA polymerase subunit beta' (1184 aa).

Residues cysteine 60, cysteine 62, cysteine 75, and cysteine 78 each contribute to the Zn(2+) site. Aspartate 449, aspartate 451, and aspartate 453 together coordinate Mg(2+). Residues cysteine 794, cysteine 867, cysteine 874, and cysteine 877 each contribute to the Zn(2+) site. Residues 1165 to 1184 are disordered; the sequence is NDQQERQDKEKEETEVKASN.

Belongs to the RNA polymerase beta' chain family. The RNAP catalytic core consists of 2 alpha, 1 beta, 1 beta' and 1 omega subunit. When a sigma factor is associated with the core the holoenzyme is formed, which can initiate transcription. Requires Mg(2+) as cofactor. It depends on Zn(2+) as a cofactor.

The catalysed reaction is RNA(n) + a ribonucleoside 5'-triphosphate = RNA(n+1) + diphosphate. DNA-dependent RNA polymerase catalyzes the transcription of DNA into RNA using the four ribonucleoside triphosphates as substrates. The sequence is that of DNA-directed RNA polymerase subunit beta' from Thermoanaerobacter pseudethanolicus (strain ATCC 33223 / 39E) (Clostridium thermohydrosulfuricum).